A 1176-amino-acid chain; its full sequence is Myosin light chain kinase, smooth muscle (1176 aa).

The interval Met1–Pro41 is actin-binding (calcium/calmodulin-sensitive). Residues Met1–Thr354 form a disordered region. The segment at Pro26–Pro41 is calmodulin-binding. Positions Thr43–Ala55 are enriched in pro residues. Repeat copies occupy residues Phe100–Asp111, Thr112–Glu123, Thr124–Glu135, Thr136–Glu147, Thr148–Glu159, Thr160–Glu171, Thr172–Glu183, Thr184–Glu195, Thr196–Glu207, Thr208–Glu219, Thr220–Glu231, Thr232–Glu243, Thr244–Glu255, Thr256–Glu267, Thr268–Glu279, and Thr280–Glu291. Residues Phe100 to Glu291 form a 16 X 12 AA tandem repeats region. Ser202 is subject to Phosphoserine. The segment at Pro319–Val721 is actin-binding (calcium/calmodulin-insensitive). A compositionally biased stretch (basic and acidic residues) spans Thr320 to Cys335. The region spanning Pro356 to Thr444 is the Ig-like C2-type 1 domain. The cysteines at positions 377 and 428 are disulfide-linked. The segment at Pro448 to Pro497 is disordered. Residues Pro498–Thr586 enclose the Ig-like C2-type 2 domain. Positions Pro594–Glu686 constitute a Fibronectin type-III domain. Positions Ser673–Glu707 are disordered. The span at Pro688–Pro706 shows a compositional bias: acidic residues. Position 699 is a phosphoserine (Ser699). Tyr710 is modified (phosphotyrosine; by ABL1). The Protein kinase domain maps to Tyr725–Leu980. ATP contacts are provided by residues Leu731–Val739 and Lys754. Phosphotyrosine; by ABL1 is present on Tyr836. Residue Asp846 is the Proton acceptor of the active site. Position 896 is a phosphotyrosine; by ABL1 (Tyr896). The segment at Thr972–Thr1035 is calmodulin-binding. Residues Ser1020, Ser1021, Ser1033, Ser1034, and Ser1037 each carry the phosphoserine modification. At Thr1039 the chain carries Phosphothreonine. Residue Ser1040 is modified to Phosphoserine. The region spanning Pro1069–Ile1158 is the Ig-like C2-type 3 domain. Cys1090 and Cys1142 are oxidised to a cystine.

Belongs to the protein kinase superfamily. CAMK Ser/Thr protein kinase family. As to quaternary structure, all isoforms including Telokin bind calmodulin. Interacts with SVIL. Interacts with CTTN; this interaction is reduced during thrombin-induced endothelial cell (EC) contraction but is promoted by the barrier-protective agonist sphingosine 1-phosphate (S1P) within lamellipodia. A complex made of ABL1, CTTN and MYLK regulates cortical actin-based cytoskeletal rearrangement critical to sphingosine 1-phosphate (S1P)-mediated endothelial cell (EC) barrier enhancement. Binds to NAA10/ARD1 and PTK2B/PYK2. Mg(2+) is required as a cofactor. It depends on Ca(2+) as a cofactor. In terms of processing, the C-terminus is deglutamylated by AGTPBP1/CCP1, AGBL1/CCP4 and AGBL4/CCP6, leading to the formation of Myosin light chain kinase, smooth muscle, deglutamylated form. The consequences of C-terminal deglutamylation are unknown. Can probably be down-regulated by phosphorylation. Tyrosine phosphorylation by ABL1 increases kinase activity, reverses MLCK-mediated inhibition of Arp2/3-mediated actin polymerization, and enhances CTTN-binding. Phosphorylation by SRC promotes CTTN binding.

Its subcellular location is the cytoplasm. It is found in the cell projection. It localises to the lamellipodium. The protein localises to the cleavage furrow. The protein resides in the cytoskeleton. Its subcellular location is the stress fiber. The catalysed reaction is L-seryl-[myosin light chain] + ATP = O-phospho-L-seryl-[myosin light chain] + ADP + H(+). The enzyme catalyses L-threonyl-[myosin light chain] + ATP = O-phospho-L-threonyl-[myosin light chain] + ADP + H(+). Its function is as follows. Calcium/calmodulin-dependent myosin light chain kinase implicated in smooth muscle contraction via phosphorylation of myosin light chains (MLC). Also regulates actin-myosin interaction through a non-kinase activity. Phosphorylates PTK2B/PYK2 and myosin light-chains. Involved in the inflammatory response (e.g. apoptosis, vascular permeability, leukocyte diapedesis), cell motility and morphology, airway hyperreactivity and other activities relevant to asthma. Required for tonic airway smooth muscle contraction that is necessary for physiological and asthmatic airway resistance. Necessary for gastrointestinal motility. Implicated in the regulation of endothelial as well as vascular permeability, probably via the regulation of cytoskeletal rearrangements. In the nervous system it has been shown to control the growth initiation of astrocytic processes in culture and to participate in transmitter release at synapses formed between cultured sympathetic ganglion cells. Critical participant in signaling sequences that result in fibroblast apoptosis. Plays a role in the regulation of epithelial cell survival. Required for epithelial wound healing, especially during actomyosin ring contraction during purse-string wound closure. Mediates RhoA-dependent membrane blebbing. Triggers TRPC5 channel activity in a calcium-dependent signaling, by inducing its subcellular localization at the plasma membrane. Promotes cell migration (including tumor cells) and tumor metastasis. PTK2B/PYK2 activation by phosphorylation mediates ITGB2 activation and is thus essential to trigger neutrophil transmigration during acute lung injury (ALI). May regulate optic nerve head astrocyte migration. Probably involved in mitotic cytoskeletal regulation. Regulates tight junction probably by modulating ZO-1 exchange in the perijunctional actomyosin ring. Mediates burn-induced microvascular barrier injury; triggers endothelial contraction in the development of microvascular hyperpermeability by phosphorylating MLC. Essential for intestinal barrier dysfunction. Mediates Giardia spp.-mediated reduced epithelial barrier function during giardiasis intestinal infection via reorganization of cytoskeletal F-actin and tight junctional ZO-1. Necessary for hypotonicity-induced Ca(2+) entry and subsequent activation of volume-sensitive organic osmolyte/anion channels (VSOAC) in cervical cancer cells. The polypeptide is Myosin light chain kinase, smooth muscle (MYLK) (Bos taurus (Bovine)).